A 178-amino-acid chain; its full sequence is Translation initiation factor IF-3 (178 aa).

A disordered region spans residues 1–20 (MRRPFKTDAPVKDGPRSNRE).

Belongs to the IF-3 family. In terms of assembly, monomer.

Its subcellular location is the cytoplasm. Its function is as follows. IF-3 binds to the 30S ribosomal subunit and shifts the equilibrium between 70S ribosomes and their 50S and 30S subunits in favor of the free subunits, thus enhancing the availability of 30S subunits on which protein synthesis initiation begins. This is Translation initiation factor IF-3 from Rhizobium leguminosarum bv. trifolii (strain WSM2304).